Consider the following 117-residue polypeptide: Hydrogenase maturation factor HypA (117 aa).

His2 provides a ligand contact to Ni(2+). The Zn(2+) site is built by Cys74, Cys77, Cys91, and Cys94.

It belongs to the HypA/HybF family.

In terms of biological role, involved in the maturation of [NiFe] hydrogenases. Required for nickel insertion into the metal center of the hydrogenase. The protein is Hydrogenase maturation factor HypA of Helicobacter pylori (strain J99 / ATCC 700824) (Campylobacter pylori J99).